The sequence spans 122 residues: Cupin 2 conserved barrel domain-containing protein (122 aa).

The segment at 55-119 (PGGVTTAEDH…DSPVEIVSIW (65 aa)) is cupin 2 conserved barrel. Positions 63, 65, 69, and 103 each coordinate Zn(2+).

Zn(2+) is required as a cofactor.

The enzyme catalyses N(6)-hydroxy-L-lysine + L-glutamate + ATP = 1-L-glutamo-2-N(6-)L-lysinohydrazine + AMP + diphosphate + 2 H(+). With respect to regulation, inhibited by 1,10-phenanthroline (OP). In terms of biological role, catalyzes hydrazine (N-N) bond formation from an unstable ester intermediate, the product of the ATP-dependent condensation of L-N(6)-OH-lysine and L-glutamine substrates by a methionyl-tRNA synthase-like protein. The polypeptide is Cupin 2 conserved barrel domain-containing protein (Rhodococcus jostii (strain RHA1)).